The primary structure comprises 1865 residues: Transient receptor potential cation channel subfamily M member 7 (1865 aa).

Met-1 is subject to N-acetylmethionine. Residues 1 to 850 (MSQKSWIEST…ITRKFYAFYH (850 aa)) are Cytoplasmic-facing. The residue at position 101 (Ser-101) is a Phosphoserine. Over residues 544–555 (NRRSGRNTSSST) the composition is skewed to low complexity. The tract at residues 544-575 (NRRSGRNTSSSTPQLRKSHESFGNRADKKEKM) is disordered. Basic and acidic residues predominate over residues 560–573 (KSHESFGNRADKKE). Residues 851–876 (APIVKFWFNTLAYLGFLMLYTFVVLV) form a helical membrane-spanning segment. Residues 877-882 (QMEQLP) lie on the Extracellular side of the membrane. Residues 883-904 (SVQEWIVIAYIFTYAIEKVREI) traverse the membrane as a helical segment. Residues 905–923 (FMSEAGKVNQKIKVWFSDY) are Cytoplasmic-facing. The chain crosses the membrane as a helical span at residues 924 to 943 (FNISDTIAIISFFIGFGLRF). The Extracellular segment spans residues 944–956 (GAKWNFANAYDNH). Residues 957-980 (VFVAGRLIYCLNIIFWYVRLLDFL) traverse the membrane as a helical segment. Residues 981 to 999 (AVNQQAGPYVMMIGKMVAN) are Cytoplasmic-facing. Residues 1000–1023 (MFYIVVIMALVLLSFGVPRKAILY) traverse the membrane as a helical segment. Over 1024–1025 (PH) the chain is Extracellular. Positions 1026–1066 (EAPSWTLAKDIVFHPYWMIFGEVYAYEIDVCANDSVIPQIC) form an intramembrane region, pore-forming. Topologically, residues 1067 to 1069 (GPG) are extracellular. Residues 1070–1098 (TWLTPFLQAVYLFVQYIIMVNLLIAFFNN) form a helical membrane-spanning segment. The Cytoplasmic portion of the chain corresponds to 1099–1865 (VYLQVKAISN…ESTNSVRLML (767 aa)). S-palmitoyl cysteine attachment occurs at residues Cys-1143, Cys-1144, and Cys-1146. Position 1163 is a phosphothreonine; by autocatalysis (Thr-1163). Phosphoserine; by autocatalysis is present on residues Ser-1191 and Ser-1193. The stretch at 1198–1250 (RVTFERVEQMCIQIKEVGDRVNYIKRSLQSLDSQIGHLQDLSALTVDTLKTLT) forms a coiled coil. Phosphoserine is present on Ser-1224. Ser-1255 and Ser-1258 each carry phosphoserine; by autocatalysis. Position 1265 is a phosphothreonine; by autocatalysis (Thr-1265). At Ser-1287 the chain carries Phosphoserine; by autocatalysis. Ser-1301 is subject to Phosphoserine. Ser-1358 is modified (phosphoserine; by autocatalysis). Phosphoserine occurs at positions 1361 and 1386. Residues 1386–1398 (SSSTSIPHLSSPP) show a composition bias toward low complexity. The interval 1386-1407 (SSSTSIPHLSSPPTKFFVSTPS) is disordered. Phosphoserine; by autocatalysis is present on residues Ser-1387 and Ser-1390. 2 positions are modified to phosphoserine: Ser-1395 and Ser-1396. Residue Ser-1404 is modified to Phosphoserine; by autocatalysis. Phosphothreonine; by autocatalysis is present on Thr-1405. Ser-1407 carries the post-translational modification Phosphoserine; by autocatalysis. Phosphothreonine; by autocatalysis is present on Thr-1435. The residue at position 1446 (Ser-1446) is a Phosphoserine; by autocatalysis. Residue Thr-1455 is modified to Phosphothreonine; by autocatalysis. Phosphoserine; by autocatalysis is present on residues Ser-1456 and Ser-1463. Thr-1467 carries the phosphothreonine modification. Ser-1468 carries the post-translational modification Phosphoserine; by autocatalysis. A Phosphothreonine; by autocatalysis modification is found at Thr-1471. Residues Ser-1476 and Ser-1477 each carry the phosphoserine; by autocatalysis modification. Thr-1482 is modified (phosphothreonine; by autocatalysis). Residues 1492 to 1511 (HSKQAEKISRRPSTEDTHEV) are disordered. The residue at position 1493 (Ser-1493) is a Phosphoserine; by autocatalysis. Residues 1494–1511 (KQAEKISRRPSTEDTHEV) show a composition bias toward basic and acidic residues. Ser-1500 is subject to Phosphoserine. Ser-1504 is subject to Phosphoserine; by autocatalysis. Position 1508 is a phosphothreonine; by autocatalysis (Thr-1508). Ser-1513, Ser-1527, and Ser-1533 each carry phosphoserine; by autocatalysis. Positions 1524–1543 (DRPSNREMPSEEGTLNGLTS) are disordered. A phosphothreonine; by autocatalysis mark is found at Thr-1537 and Thr-1542. The residue at position 1543 (Ser-1543) is a Phosphoserine; by autocatalysis. Thr-1551 is modified (phosphothreonine; by autocatalysis). Residues Ser-1567 and Ser-1569 each carry the phosphoserine; by autocatalysis modification. Thr-1583 carries the phosphothreonine; by autocatalysis modification. The region spanning 1594–1824 (ILNNSMSSWS…CCRKLKLPDL (231 aa)) is the Alpha-type protein kinase domain. 2 positions are modified to phosphoserine; by autocatalysis: Ser-1598 and Ser-1615. The ADP site is built by Gly-1621, Gly-1622, Leu-1623, Arg-1624, and Lys-1648. A Phosphoserine; by autocatalysis modification is found at Ser-1660. Thr-1685 is modified (phosphothreonine; by autocatalysis). ADP-binding residues include Glu-1720, Glu-1721, and Met-1723. A Zn(2+)-binding site is contributed by His-1753. Asp-1767 serves as the catalytic Proton acceptor. Position 1777 (Asp-1777) interacts with ADP. Ser-1779 is modified (phosphoserine; by autocatalysis). Positions 1810, 1812, and 1816 each coordinate Zn(2+). Residue Thr-1830 is modified to Phosphothreonine; by autocatalysis. The tract at residues 1836-1865 (FPQDEPSDLNLQPGNSTKESESTNSVRLML) is disordered. The span at 1844 to 1865 (LNLQPGNSTKESESTNSVRLML) shows a compositional bias: polar residues. Ser-1851 is modified (phosphoserine). Ser-1860 carries the post-translational modification Phosphoserine; by autocatalysis.

It in the C-terminal section; belongs to the protein kinase superfamily. Alpha-type protein kinase family. ALPK subfamily. In the N-terminal section; belongs to the transient receptor (TC 1.A.4) family. LTrpC subfamily. TRPM7 sub-subfamily. In terms of assembly, homotetramer. Interacts with PLCB1. Forms heteromers with TRPM6; heteromeric channels are functionally different from the homomeric channels. Zn(2+) is required as a cofactor. Palmitoylated; palmitoylation at Cys-1143, Cys-1144 and Cys-1146 promotes TRPM7 trafficking from the Golgi to the surface membrane. Post-translationally, autophosphorylated; autophosphorylation of C-terminus regulates TRPM7 kinase activity towards its substrates. In terms of processing, the C-terminal kinase domain can be cleaved from the channel segment in a cell-type-specific fashion. TRPM7 is cleaved by caspase-8, dissociating the kinase from the ion-conducting pore. The cleaved kinase fragments (M7CKs) can translocate to the cell nucleus and binds chromatin-remodeling complex proteins in a Zn(2+)-dependent manner to ultimately phosphorylate specific Ser/Thr residues of histones.

The protein localises to the cell membrane. It is found in the cytoplasmic vesicle membrane. The protein resides in the nucleus. It carries out the reaction L-seryl-[protein] + ATP = O-phospho-L-seryl-[protein] + ADP + H(+). The enzyme catalyses L-threonyl-[protein] + ATP = O-phospho-L-threonyl-[protein] + ADP + H(+). It catalyses the reaction Mg(2+)(in) = Mg(2+)(out). The catalysed reaction is Ca(2+)(in) = Ca(2+)(out). It carries out the reaction Zn(2+)(in) = Zn(2+)(out). Channel displays constitutive activity. Channel activity is negatively regulated by cytosolic Mg(2+) and Mg-ATP. Channel activity is negatively regulated by low intracellular pH. Resting free cytosolic Mg(2+) and Mg-ATP concentrations seem to be sufficient to block native TRPM7 channel activity. TRPM7 channel activity is highly dependent on membrane levels of phosphatidylinositol 4,5 bisphosphate (PIP2). PIP2 hydrolysis negatively regulates TRPM7 channel activity. TRPM7 kinase activity does not affect channel activity. The kinase activity is controlled through the autophosphorylation of a serine/threonine-rich region located N-terminal to the catalytic domain. In terms of biological role, bifunctional protein that combines an ion channel with an intrinsic kinase domain, enabling it to modulate cellular functions either by conducting ions through the pore or by phosphorylating downstream proteins via its kinase domain. The channel is highly permeable to divalent cations, specifically calcium (Ca2+), magnesium (Mg2+) and zinc (Zn2+) and mediates their influx. Controls a wide range of biological processes such as Ca2(+), Mg(2+) and Zn(2+) homeostasis, vesicular Zn(2+) release channel and intracellular Ca(2+) signaling, embryonic development, immune responses, cell motility, proliferation and differentiation. The C-terminal alpha-kinase domain autophosphorylates cytoplasmic residues of TRPM7. In vivo, TRPM7 phosphorylates SMAD2, suggesting that TRPM7 kinase may play a role in activating SMAD signaling pathways. In vitro, TRPM7 kinase phosphorylates ANXA1 (annexin A1), myosin II isoforms and a variety of proteins with diverse cellular functions. The cleaved channel exhibits substantially higher current and potentiates Fas receptor signaling. Its function is as follows. The C-terminal kinase domain can be cleaved from the channel segment in a cell-type-specific fashion. In immune cells, the TRPM7 kinase domain is clipped from the channel domain by caspases in response to Fas-receptor stimulation. The cleaved kinase fragments can translocate to the nucleus, and bind chromatin-remodeling complex proteins in a Zn(2+)-dependent manner to ultimately phosphorylate specific Ser/Thr residues of histones known to be functionally important for cell differentiation and embryonic development. The chain is Transient receptor potential cation channel subfamily M member 7 (TRPM7) from Homo sapiens (Human).